The chain runs to 149 residues: Detocs response regulatory protein DtcB (149 aa).

A Response regulatory domain is found at 1-134; the sequence is MILIVEDDAH…DIEACYYDHN (134 aa). D53 bears the 4-aspartylphosphate mark.

Post-translationally, probably phosphorylated by DtcA.

Possible phosphate scavenger member of the two-component regulatory system Detocs that confers resistance to bacteriophage. When the system (DtcA-DtcB-DtcC) is expressed in a susceptible E.coli (strain MG1655) it confers resistance to bacteriophages T2, T4, T5, T6 and SECphi27. Detocs inhibits T5 infection leading to growth arrest but not complete cell lysis, during SECphi27 infection leads to cell lysis. Overexpression of this protein along with the intact Detocs locus cancels T5 immunity; when the phosphate-receiving Asp-53 is mutated to Ala in this protein, immunity is restored. DtcA probably autophosphorylates upon sensing viral infection, and subsequently transfers the phosphate signal to DtcC which activates it, leading to an antiviral defense; DtcB (this subunit) may scavenge phosphorylation signals from accidental activation of DtcA. This is Detocs response regulatory protein DtcB from Vibrio alginolyticus.